A 63-amino-acid polypeptide reads, in one-letter code: Jingdongin-1 (63 aa).

The N-terminal stretch at 1–22 (MLTLKKSMLLLFFLGTINLSLC) is a signal peptide. A propeptide spanning residues 23-44 (EQERDADEEERRDDDEMDVEVE) is cleaved from the precursor. An intrachain disulfide couples Cys-57 to Cys-63.

Expressed by the skin glands.

It localises to the secreted. The synthetic peptide has antimicrobial activity against Gram-negative bacterium B.dysenteriae (MIC=35 ug/ml), against Gram-positive bacteria S.aureus ATCC 2592 (MIC=4.7 ug/ml) and B.subtilis ATCC 6633 (MIC=9.38 ug/ml) and against fungus C.albicans (MIC=18.75 ug/ml). Has no activity against Gram-negative bacterium E.coli ATCC 25922 but exhibits low hemolytic activity at concentrations up to 200 ug/ml. In Amolops jingdongensis (Chinese torrent frog), this protein is Jingdongin-1.